Reading from the N-terminus, the 278-residue chain is Formamidopyrimidine-DNA glycosylase (278 aa).

The Schiff-base intermediate with DNA role is filled by Pro2. Glu3 serves as the catalytic Proton donor. Residue Lys58 is the Proton donor; for beta-elimination activity of the active site. Residues His92 and Arg111 each contribute to the DNA site. The FPG-type zinc finger occupies His239–Ile273. Arg263 (proton donor; for delta-elimination activity) is an active-site residue.

It belongs to the FPG family. Monomer. Requires Zn(2+) as cofactor.

It catalyses the reaction Hydrolysis of DNA containing ring-opened 7-methylguanine residues, releasing 2,6-diamino-4-hydroxy-5-(N-methyl)formamidopyrimidine.. The catalysed reaction is 2'-deoxyribonucleotide-(2'-deoxyribose 5'-phosphate)-2'-deoxyribonucleotide-DNA = a 3'-end 2'-deoxyribonucleotide-(2,3-dehydro-2,3-deoxyribose 5'-phosphate)-DNA + a 5'-end 5'-phospho-2'-deoxyribonucleoside-DNA + H(+). Functionally, involved in base excision repair of DNA damaged by oxidation or by mutagenic agents. Acts as a DNA glycosylase that recognizes and removes damaged bases. Has a preference for oxidized purines, such as 7,8-dihydro-8-oxoguanine (8-oxoG). Has AP (apurinic/apyrimidinic) lyase activity and introduces nicks in the DNA strand. Cleaves the DNA backbone by beta-delta elimination to generate a single-strand break at the site of the removed base with both 3'- and 5'-phosphates. This Latilactobacillus sakei subsp. sakei (strain 23K) (Lactobacillus sakei subsp. sakei) protein is Formamidopyrimidine-DNA glycosylase.